Reading from the N-terminus, the 570-residue chain is Probable diguanylate cyclase DgcQ (570 aa).

A run of 2 helical transmembrane segments spans residues 20-40 and 360-380; these read FGPG…STLL and IALT…WGVI. The region spanning 428–563 is the GGDEF domain; the sequence is QPFSVIQLDL…GRNRICASDA (136 aa). Residue Asp436 coordinates Mg(2+). Residues Asn444, His449, and Asp453 each coordinate substrate. Mg(2+) is bound at residue Glu479. Glu479 (proton acceptor) is an active-site residue.

In terms of assembly, homodimer. Requires Mg(2+) as cofactor.

It is found in the cell inner membrane. It catalyses the reaction 2 GTP = 3',3'-c-di-GMP + 2 diphosphate. The protein operates within glycan metabolism; bacterial cellulose biosynthesis. It functions in the pathway purine metabolism; 3',5'-cyclic di-GMP biosynthesis. Functionally, catalyzes the synthesis of cyclic-di-GMP (c-di-GMP) via the condensation of 2 GTP molecules. Cyclic-di-GMP is a second messenger which controls cell surface-associated traits in bacteria. Involved in the regulation of cellulose production. This Salmonella choleraesuis (strain SC-B67) protein is Probable diguanylate cyclase DgcQ.